Consider the following 244-residue polypeptide: Chaperone protein FimB/FhaD (244 aa).

Residues 1–24 form the signal peptide; the sequence is MARWRRRLGVAALGAAMLASLAPA.

This sequence belongs to the periplasmic pilus chaperone family.

It is found in the periplasm. Its function is as follows. Required for the biogenesis of the filamentous hemagglutinin and the fimbria. This Bordetella pertussis (strain Tohama I / ATCC BAA-589 / NCTC 13251) protein is Chaperone protein FimB/FhaD (fimB).